Here is an 876-residue protein sequence, read N- to C-terminus: Radial spoke head 10 homolog B (876 aa).

The segment covering 1–16 (MVKEKKKADKKGDKSA) has biased composition (basic and acidic residues). Positions 1–71 (MVKEKKKADK…VQMEQSEEET (71 aa)) are disordered. Residues 17-37 (RSPSSISDNPEASKQDSNASK) are compositionally biased toward polar residues. The segment covering 39 to 50 (EVAPSAVVPVVE) has biased composition (low complexity). 10 MORN repeats span residues 86–108 (YEGEKVRGLYEGEGFAVFQGGNT), 109–129 (YHGMFSEGLMHGQGTYIWADG), 132–154 (YEGDFVKNIPMNHGVYTWPDGST), 155–172 (YEGEVTNGMRNGFGMFKC), 179–196 (YIGHWCHGKRHGKGSIYY), 204–225 (YEGDWVYNIKKGWGIRCYKSGN), 227–244 (YEGQWENNMRHGEGRMRW), 251–268 (YTGHWEKGIQNGFGTHTW), 284–305 (YIGEFVNGFRHGQGKFYYASGA), and 307–328 (YEGEWASNKKQGRGRMTFKNGH). Positions 356–372 (WSDASQRSRQPRGSSVS) are enriched in polar residues. Residues 356–386 (WSDASQRSRQPRGSSVSAVREPETLRKLDGS) form a disordered region. Residues 375–386 (REPETLRKLDGS) show a composition bias toward basic and acidic residues. Residues 790-832 (LKEKVKENQLQEAELAQQRQIENEELEARLNILREEEARKQDF) are a coiled coil. The disordered stretch occupies residues 839–876 (LKEPSEIPASQPLTPSPPKEDLASIQTSKASPGKKKKK).

As to quaternary structure, interacts with RSPH6A. Does not appear to be part of the axonemal radial spoke complexes 1 or 2. In terms of tissue distribution, expressed in ependymal cells (at protein level).

It localises to the cytoplasm. The protein localises to the cytoskeleton. It is found in the cilium axoneme. The protein resides in the cell projection. Its subcellular location is the cilium. It localises to the flagellum. Its function is as follows. May function as part of the axonemal radial spoke complex 3 (RS3). Radial spoke complexes are important for ciliary motility. The sequence is that of Radial spoke head 10 homolog B from Mus musculus (Mouse).